We begin with the raw amino-acid sequence, 100 residues long: Transcription and mRNA export factor SUS1 (100 aa).

This sequence belongs to the ENY2 family. As to quaternary structure, component of the nuclear pore complex (NPC)-associated TREX-2 complex (transcription and export complex 2), composed of at least SUS1, SAC3, THP1, SEM1, and CDC31. TREX-2 contains 2 SUS1 chains. The TREX-2 complex interacts with the nucleoporin NUP1. Component of the 1.8 MDa SAGA transcription coactivator-HAT complex. SAGA is built of 5 distinct domains with specialized functions. Within the SAGA complex, SUS1, SGF11, SGF73 and UBP8 form an additional subcomplex of SAGA called the DUB module (deubiquitination module). Interacts directly with THP1, SAC3, SGF11, and with the RNA polymerase II.

The protein resides in the nucleus. The protein localises to the nucleoplasm. Its subcellular location is the cytoplasm. It localises to the P-body. Functionally, involved in mRNA export coupled transcription activation by association with both the TREX-2 and the SAGA complexes. At the promoters, SAGA is required for recruitment of the basal transcription machinery. It influences RNA polymerase II transcriptional activity through different activities such as TBP interaction and promoter selectivity, interaction with transcription activators, and chromatin modification through histone acetylation and deubiquitination. Within the SAGA complex, participates in a subcomplex required for deubiquitination of H2B and for the maintenance of steady-state H3 methylation levels. The TREX-2 complex functions in docking export-competent ribonucleoprotein particles (mRNPs) to the nuclear entrance of the nuclear pore complex (nuclear basket). TREX-2 participates in mRNA export and accurate chromatin positioning in the nucleus by tethering genes to the nuclear periphery. May also be involved in cytoplasmic mRNA decay by interaction with components of P-bodies. The protein is Transcription and mRNA export factor SUS1 of Candida glabrata (strain ATCC 2001 / BCRC 20586 / JCM 3761 / NBRC 0622 / NRRL Y-65 / CBS 138) (Yeast).